A 668-amino-acid polypeptide reads, in one-letter code: Tastin (668 aa).

Disordered stretches follow at residues 1 to 102 (MTTL…GGSN), 154 to 177 (ERKGGTTQRGQSARSSAYLAPRIP), and 189 to 285 (FSRL…GRHH). Ser16 bears the Phosphoserine mark. Composition is skewed to polar residues over residues 27–37 (QRCQDFSSVKS) and 55–64 (PRSTQRQRPL). At Ser97 the chain carries Phosphoserine. A compositionally biased stretch (polar residues) spans 158–168 (GTTQRGQSARS). Ser169 carries the post-translational modification Phosphoserine. Basic and acidic residues-rich tracts occupy residues 227-246 (ELRRETCGGGRDGDCTDRRT) and 269-282 (GEQEAVPHSDDGGG). 3 positions are modified to phosphoserine: Ser306, Ser324, and Ser338. 2 disordered regions span residues 364-392 (ITLQKEPRKPSVASTSGPRPKRTPSHQEL) and 462-502 (TEPL…AEPE).

In terms of assembly, directly binds bystin, and indirectly trophinin.

Its subcellular location is the cytoplasm. Functionally, could be involved with bystin and trophinin in a cell adhesion molecule complex that mediates an initial attachment of the blastocyst to uterine epithelial cells at the time of the embryo implantation. The polypeptide is Tastin (Mus musculus (Mouse)).